The chain runs to 2179 residues: Voltage-dependent L-type calcium channel subunit alpha-1D (2179 aa).

Disordered regions lie at residues 1–21 (MMMMMMMKKMQHQRQHQEDHA), 30–49 (TRLPISGEGPTSQPNSSKQT), and 64–100 (KAAQTMSTSAPPPVGSLSQRKRQQYAKSKKQGNSSNS). At 1 to 126 (MMMMMMMKKM…RACISIVEWK (126 aa)) the chain is on the cytoplasmic side. Positions 38-49 (GPTSQPNSSKQT) are enriched in polar residues. The span at 82-93 (QRKRQQYAKSKK) shows a compositional bias: basic residues. An I repeat occupies 113-409 (NPIRRACISI…LVLGVLSGEF (297 aa)). The helical transmembrane segment at 127–145 (PFDIFILLAIFANCVALAI) threads the bilayer. The Extracellular segment spans residues 146–163 (YIPFPEDDSNSTNHNLEK). A helical transmembrane segment spans residues 164–183 (VEYAFLIIFTVETFLKIIAY). The Cytoplasmic portion of the chain corresponds to 184-195 (GLLLHPNAYVRN). The chain crosses the membrane as a helical span at residues 196-214 (GWNLLDFVIVIVGLFSVIL). The Extracellular portion of the chain corresponds to 215-235 (EQLTKETEGGNHSSGKSGGFD). A helical transmembrane segment spans residues 236–254 (VKALRAFRVLRPLRLVSGV). Topologically, residues 255 to 273 (PSLQVVLNSIIKAMVPLLH) are cytoplasmic. A helical membrane pass occupies residues 274–293 (IALLVLFVIIIYAIIGLELF). The Extracellular segment spans residues 294 to 381 (IGKMHKTCFF…WVNDAIGWEW (88 aa)). Glu364 provides a ligand contact to Ca(2+). Residues 382 to 406 (PWVYFVSLIILGSFFVLNLVLGVLS) form a helical membrane-spanning segment. The Cytoplasmic portion of the chain corresponds to 407–543 (GEFSKEREKA…RRCRAAVKSV (137 aa)). Residues 429-446 (QQLEEDLKGYLDWITQAE) are binding to the beta subunit. Positions 449-480 (DPENEEEGGEEGKRNTSMPTSETESVNTENVS) are disordered. Residues 463–479 (NTSMPTSETESVNTENV) show a composition bias toward polar residues. One copy of the II repeat lies at 529–775 (NRFNRRRCRA…VFLAIAVDNL (247 aa)). Residues 544-563 (TFYWLVIVLVFLNTLTISSE) form a helical membrane-spanning segment. The Extracellular segment spans residues 564-578 (HYNQPDWLTQIQDIA). The chain crosses the membrane as a helical span at residues 579–597 (NKVLLALFTCEMLVKMYSL). The Cytoplasmic portion of the chain corresponds to 598 to 605 (GLQAYFVS). A helical transmembrane segment spans residues 606 to 624 (LFNRFDCFVVCGGITETIL). The Extracellular portion of the chain corresponds to 625–634 (VELELMSPLG). Residues 635–653 (VSVFRCVRLLRIFKVTRHW) form a helical membrane-spanning segment. The Cytoplasmic portion of the chain corresponds to 654–672 (TSLSNLVASLLNSMKSIAS). A helical membrane pass occupies residues 673–693 (LLLLLFLFIIIFSLLGMQLFG). Residues 694 to 747 (GKFNFDETQTKRSTFDNFPQALLTVFQILTGEDWNAVMYDGIMAYGGPSSSGMI) are Extracellular-facing. Residue Glu725 coordinates Ca(2+). Residues 748–772 (VCIYFIILFICGNYILLNVFLAIAV) form a helical membrane-spanning segment. Positions 771–810 (AVDNLADAESLNTAQKEEAEEKERKKIARKESLENKKNNK) form a coiled coil. The Cytoplasmic portion of the chain corresponds to 773–906 (DNLADAESLN…VGCHKLINHH (134 aa)). Residues 786 to 810 (KEEAEEKERKKIARKESLENKKNNK) show a composition bias toward basic and acidic residues. Residues 786–870 (KEEAEEKERK…AGPRPRRISE (85 aa)) are disordered. Over residues 811-822 (PEVNQIANSDNK) the composition is skewed to polar residues. Over residues 845-858 (VGEEEEEEEEDEPE) the composition is skewed to acidic residues. The stretch at 893–1175 (NPIRVGCHKL…IFVGFVIVTF (283 aa)) is one III repeat. The chain crosses the membrane as a helical span at residues 907–925 (IFTNLILVFIMLSSAALAA). The Extracellular segment spans residues 926–941 (EDPIRSHSFRNTILGY). A helical transmembrane segment spans residues 942 to 961 (FDYAFTAIFTVEILLKMTTF). The Cytoplasmic portion of the chain corresponds to 962-973 (GAFLHKGAFCRN). Residues 974–992 (YFNLLDMLVVGVSLVSFGI) form a helical membrane-spanning segment. Residues 993 to 998 (QSSAIS) are Extracellular-facing. A helical transmembrane segment spans residues 999 to 1018 (VVKILRVLRVLRPLRAINRA). Topologically, residues 1019 to 1037 (KGLKHVVQCVFVAIRTIGN) are cytoplasmic. The helical transmembrane segment at 1038 to 1057 (IMIVTTLLQFMFACIGVQLF) threads the bilayer. Residues 1058–1147 (KGKFYRCTDE…VGPVYNYRVE (90 aa)) lie on the Extracellular side of the membrane. Residues 1095-1185 (RIWQNSDFNF…QEQGEKEYKN (91 aa)) form a dihydropyridine binding region. Glu1121 is a binding site for Ca(2+). A helical membrane pass occupies residues 1148–1168 (ISIFFIIYIIIVAFFMMNIFV). Residues 1169 to 1225 (GFVIVTFQEQGEKEYKNCELDKNQRQCVEYALKARPLRRYIPKNPYQYKFWYVVNSS) lie on the Cytoplasmic side of the membrane. One copy of the IV repeat lies at 1212–1487 (NPYQYKFWYV…LFVAVIMDNF (276 aa)). Residues 1226–1244 (PFEYMMFVLIMLNTLCLAM) traverse the membrane as a helical segment. Topologically, residues 1245 to 1259 (QHYEQSKMFNDAMDI) are extracellular. The helical transmembrane segment at 1260-1279 (LNMVFTGVFTVEMVLKVIAF) threads the bilayer. Residues 1280–1286 (KPKGYFS) lie on the Cytoplasmic side of the membrane. The chain crosses the membrane as a helical span at residues 1287–1308 (DAWNTFDSLIVIGSIIDVALSE). The Extracellular segment spans residues 1309 to 1333 (ADPSESETIPLPTATPGNSEESNRI). Residues 1334–1353 (SITFFRLFRVMRLVKLLSRG) traverse the membrane as a helical segment. Over 1354-1372 (EGIRTLLWTFIKSFQALPY) the chain is Cytoplasmic. Residues 1373–1392 (VALLIAMLFFIYAVIGMQMF) form a helical membrane-spanning segment. Residues 1393–1459 (GKVAMRDNNQ…GEEYTCGSNF (67 aa)) lie on the Extracellular side of the membrane. Residues 1440–1506 (LCDPDSDYNP…LGPHHLDEFK (67 aa)) form a dihydropyridine binding region. The interval 1452–1495 (EYTCGSNFAIVYFISFYMLCAFLIINLFVAVIMDNFDYLTRDWS) is phenylalkylamine binding. A helical transmembrane segment spans residues 1460–1484 (AIVYFISFYMLCAFLIINLFVAVIM). Over 1485 to 2179 (DNFDYLTRDW…ADEMICITTL (695 aa)) the chain is Cytoplasmic. 3 disordered regions span residues 1704-1789 (LLGN…AHGK), 1896-1941 (FERP…RSSF), and 2135-2171 (GDMGPISHRQDYELQDFGPGYSDEEPDPGREEEDLAD). The segment covering 1764-1782 (SIGKQAPTSTNANLNNANM) has biased composition (polar residues). Over residues 2156 to 2171 (SDEEPDPGREEEDLAD) the composition is skewed to acidic residues.

This sequence belongs to the calcium channel alpha-1 subunit (TC 1.A.1.11) family. CACNA1D subfamily. As to quaternary structure, voltage-dependent calcium channels are multisubunit complexes, consisting of alpha-1, alpha-2, beta and delta subunits in a 1:1:1:1 ratio. The channel activity is directed by the pore-forming and voltage-sensitive alpha-1 subunit. In many cases, this subunit is sufficient to generate voltage-sensitive calcium channel activity. The auxiliary subunits beta and alpha-2/delta linked by a disulfide bridge regulate the channel activity. Interacts (via IQ domain) with CABP1 and CABP4 in a calcium independent manner. Interacts with RIMBP2. In terms of tissue distribution, expressed in the inner hair cells (IHC) of the cochlea.

The protein resides in the membrane. The enzyme catalyses Ca(2+)(in) = Ca(2+)(out). In terms of biological role, voltage-sensitive calcium channels (VSCC) mediate the entry of calcium ions into excitable cells and are also involved in a variety of calcium-dependent processes, including muscle contraction, hormone or neurotransmitter release, gene expression, cell motility, cell division and cell death. The isoform alpha-1D gives rise to L-type calcium currents. Long-lasting (L-type) calcium channels belong to the 'high-voltage activated' (HVA) group. They are blocked by dihydropyridines (DHP), phenylalkylamines, and by benzothiazepines. The polypeptide is Voltage-dependent L-type calcium channel subunit alpha-1D (Cacna1d) (Mus musculus (Mouse)).